The following is a 270-amino-acid chain: Probable ribosomal RNA small subunit methyltransferase A (270 aa).

6 residues coordinate S-adenosyl-L-methionine: His19, Leu21, Gly46, Glu67, Asp92, and Asn107.

This sequence belongs to the class I-like SAM-binding methyltransferase superfamily. rRNA adenine N(6)-methyltransferase family. RsmA subfamily.

Its subcellular location is the cytoplasm. Specifically dimethylates two adjacent adenosines in the loop of a conserved hairpin near the 3'-end of 16S rRNA in the 30S particle. May play a critical role in biogenesis of 30S subunits. The polypeptide is Probable ribosomal RNA small subunit methyltransferase A (Methanococcoides burtonii (strain DSM 6242 / NBRC 107633 / OCM 468 / ACE-M)).